We begin with the raw amino-acid sequence, 324 residues long: Hairy/enhancer-of-split related with YRPW motif protein 2 (324 aa).

Positions 1–34 (MKRPCEDSTSDSDMDETIDVGSENNYSGQSNGSF) are disordered. A compositionally biased stretch (acidic residues) spans 8–18 (STSDSDMDETI). The span at 22–34 (SENNYSGQSNGSF) shows a compositional bias: polar residues. The 56-residue stretch at 48-103 (ARKKRRGIIEKRRRDRINNSLSELRRLVPTAFEKQGSAKLEKAEILQMTVDHLKML) folds into the bHLH domain. An Orange domain is found at 122 to 157 (LSIGFRECLTEVARYLSSVEGLDSSDPLRVRLVSHL). Residues 294–311 (SSSVSTSTTSQQSSGSSS) are compositionally biased toward low complexity. Positions 294 to 324 (SSSVSTSTTSQQSSGSSSKPYRPWGTEVGAF) are disordered. A YRPW motif motif is present at residues 314 to 317 (YRPW).

Belongs to the HEY family.

It is found in the nucleus. In terms of biological role, transcriptional repressor. Downstream effector of Notch signaling which regulates cell fate choice in angioblasts. Represses the venous cell fate, thereby promoting the arterial cell fate and aorta formation. This Danio rerio (Zebrafish) protein is Hairy/enhancer-of-split related with YRPW motif protein 2 (hey2).